Here is a 63-residue protein sequence, read N- to C-terminus: Small integral membrane protein 43 (63 aa).

Important for interaction with SLC2A1 and SLC2A3 stretches follow at residues 7–29 (LLLYLALFFFLLFLLFLLLFVVI) and 51–57 (HREPWGF). A helical transmembrane segment spans residues 9-29 (LYLALFFFLLFLLFLLLFVVI).

Interacts with glucose transporters SLC2A1/GLUT1 and SLC2A3/GLUT3; the interactions may promote SLC2A1- and SLC2A3-mediated glucose transport to meet the energy needs of mesendoderm differentiation.

The protein resides in the cell membrane. Required for mesendoderm differentiation. Interacts with glucose transporters and promotes glucose uptake. Probably augments the glucose uptake capacity of glucose transporter proteins to meet the energy needs of mesendoderm differentiation. The polypeptide is Small integral membrane protein 43 (Homo sapiens (Human)).